A 273-amino-acid polypeptide reads, in one-letter code: 5-deoxy-glucuronate isomerase (273 aa).

It belongs to the isomerase IolB family.

It carries out the reaction 5-deoxy-D-glucuronate = 5-dehydro-2-deoxy-D-gluconate. Its pathway is polyol metabolism; myo-inositol degradation into acetyl-CoA; acetyl-CoA from myo-inositol: step 4/7. Involved in the isomerization of 5-deoxy-glucuronate (5DG) to 5-dehydro-2-deoxy-D-gluconate (DKG or 2-deoxy-5-keto-D-gluconate). The protein is 5-deoxy-glucuronate isomerase of Listeria monocytogenes serotype 4a (strain HCC23).